The primary structure comprises 78 residues: ATP synthase subunit c (78 aa).

The next 2 helical transmembrane spans lie at 11–31 (FIGAGLATIGLGGAGIGVGHV) and 53–73 (LFVGIAFAEALGIFSFLIALL).

It belongs to the ATPase C chain family. F-type ATPases have 2 components, F(1) - the catalytic core - and F(0) - the membrane proton channel. F(1) has five subunits: alpha(3), beta(3), gamma(1), delta(1), epsilon(1). F(0) has four main subunits: a(1), b(1), b'(1) and c(10-14). The alpha and beta chains form an alternating ring which encloses part of the gamma chain. F(1) is attached to F(0) by a central stalk formed by the gamma and epsilon chains, while a peripheral stalk is formed by the delta, b and b' chains.

Its subcellular location is the cell inner membrane. F(1)F(0) ATP synthase produces ATP from ADP in the presence of a proton or sodium gradient. F-type ATPases consist of two structural domains, F(1) containing the extramembraneous catalytic core and F(0) containing the membrane proton channel, linked together by a central stalk and a peripheral stalk. During catalysis, ATP synthesis in the catalytic domain of F(1) is coupled via a rotary mechanism of the central stalk subunits to proton translocation. Functionally, key component of the F(0) channel; it plays a direct role in translocation across the membrane. A homomeric c-ring of between 10-14 subunits forms the central stalk rotor element with the F(1) delta and epsilon subunits. This Cereibacter sphaeroides (strain ATCC 17025 / ATH 2.4.3) (Rhodobacter sphaeroides) protein is ATP synthase subunit c.